Reading from the N-terminus, the 1176-residue chain is Translation initiation factor IF-2 (1176 aa).

Low complexity-rich tracts occupy residues 32-44 (IAAK…ISDS), 57-79 (ASPS…AGKS), 94-166 (APVA…AAPS), and 193-235 (KPTP…VKPT). Disordered regions lie at residues 32 to 502 (IAAK…QRQK) and 535 to 567 (RPAK…RQRR). Positions 251–270 (APPPASTPRPAPSRPTPRPA) are enriched in pro residues. 2 stretches are compositionally biased toward low complexity: residues 388 to 409 (GRPG…GGMR) and 439 to 469 (NRPT…FRPG). Basic and acidic residues predominate over residues 478-492 (GRPDWDDSAKLEALR). A compositionally biased stretch (basic residues) spans 553 to 567 (VRKRRKETARQRQRR). Residues 668–840 (RRPPVVTVMG…LLLVTEVEDL (173 aa)) form the tr-type G domain. Positions 677–684 (GHVDHGKT) are G1. 677 to 684 (GHVDHGKT) contacts GTP. Residues 702–706 (GITQH) are G2. Residues 727–730 (DTPG) form a G3 region. GTP-binding positions include 727 to 731 (DTPGH) and 781 to 784 (NKID). The tract at residues 781–784 (NKID) is G4. The segment at 817 to 819 (SAI) is G5.

The protein belongs to the TRAFAC class translation factor GTPase superfamily. Classic translation factor GTPase family. IF-2 subfamily.

Its subcellular location is the cytoplasm. One of the essential components for the initiation of protein synthesis. Protects formylmethionyl-tRNA from spontaneous hydrolysis and promotes its binding to the 30S ribosomal subunits. Also involved in the hydrolysis of GTP during the formation of the 70S ribosomal complex. This is Translation initiation factor IF-2 from Synechococcus sp. (strain CC9902).